We begin with the raw amino-acid sequence, 466 residues long: Cysteine--tRNA ligase (466 aa).

Cys-33 contacts Zn(2+). Residues 35 to 45 (PTVYDYAHIGN) carry the 'HIGH' region motif. Positions 221, 246, and 250 each coordinate Zn(2+). Positions 279-283 (KMSKS) match the 'KMSKS' region motif. Position 282 (Lys-282) interacts with ATP.

It belongs to the class-I aminoacyl-tRNA synthetase family. As to quaternary structure, monomer. Requires Zn(2+) as cofactor.

The protein localises to the cytoplasm. It catalyses the reaction tRNA(Cys) + L-cysteine + ATP = L-cysteinyl-tRNA(Cys) + AMP + diphosphate. The polypeptide is Cysteine--tRNA ligase (Rhizobium meliloti (strain 1021) (Ensifer meliloti)).